The primary structure comprises 421 residues: Ankyrin repeat and SOCS box protein 6 (421 aa).

ANK repeat units lie at residues 67 to 97 (EGVS…NLNF), 102 to 131 (TYYT…DINR), 136 to 166 (HESS…DVNA), 170 to 205 (HGKT…DVKA), 226 to 255 (GGDK…DPSE), and 260 to 289 (ESLT…AYNC). Positions 360–415 (ALHFSLRQLESYPPPLKHLCRVAIRLYLQPWPVDVKVKALPLPDRLKWYLLSEHSG) constitute an SOCS box domain.

This sequence belongs to the ankyrin SOCS box (ASB) family. Binds APS. Identified in a complex with ELOB and ELOC. Interacts with CUL5 and RNF7. Interacts with SQSTM1.

The protein resides in the cytoplasm. The protein operates within protein modification; protein ubiquitination. In terms of biological role, probable substrate-recognition component of a SCF-like ECS (Elongin-Cullin-SOCS-box protein) E3 ubiquitin-protein ligase complex which mediates the ubiquitination and subsequent proteasomal degradation of target proteins. May play a role in the regulation of cell proliferation and autophagy by promoting the ubiquitination and degradation of SQSTM1. This chain is Ankyrin repeat and SOCS box protein 6 (ASB6), found in Pongo abelii (Sumatran orangutan).